The sequence spans 571 residues: Methionine--tRNA ligase (571 aa).

The 'HIGH' region motif lies at 10–20 (PYVNAVPHLGN). Zn(2+)-binding residues include Cys143, Cys146, Cys156, and Cys159. The short motif at 333–337 (KFSKS) is the 'KMSKS' region element. Residue Lys336 coordinates ATP.

The protein belongs to the class-I aminoacyl-tRNA synthetase family. MetG type 1 subfamily. The cofactor is Zn(2+).

The protein localises to the cytoplasm. It carries out the reaction tRNA(Met) + L-methionine + ATP = L-methionyl-tRNA(Met) + AMP + diphosphate. Is required not only for elongation of protein synthesis but also for the initiation of all mRNA translation through initiator tRNA(fMet) aminoacylation. This chain is Methionine--tRNA ligase, found in Sulfolobus acidocaldarius (strain ATCC 33909 / DSM 639 / JCM 8929 / NBRC 15157 / NCIMB 11770).